Reading from the N-terminus, the 165-residue chain is Phosphopantetheine adenylyltransferase (165 aa).

Serine 11 lines the substrate pocket. Residues 11–12 and histidine 19 each bind ATP; that span reads SF. Residues lysine 43, threonine 76, and arginine 90 each coordinate substrate. Residues 91 to 93, glutamate 101, and 126 to 132 each bind ATP; these read GIR and FSFISSS.

This sequence belongs to the bacterial CoaD family. As to quaternary structure, homohexamer. The cofactor is Mg(2+).

Its subcellular location is the cytoplasm. It carries out the reaction (R)-4'-phosphopantetheine + ATP + H(+) = 3'-dephospho-CoA + diphosphate. The protein operates within cofactor biosynthesis; coenzyme A biosynthesis; CoA from (R)-pantothenate: step 4/5. In terms of biological role, reversibly transfers an adenylyl group from ATP to 4'-phosphopantetheine, yielding dephospho-CoA (dPCoA) and pyrophosphate. In Latilactobacillus sakei subsp. sakei (strain 23K) (Lactobacillus sakei subsp. sakei), this protein is Phosphopantetheine adenylyltransferase.